A 248-amino-acid chain; its full sequence is Small ribosomal subunit protein uS3 (248 aa).

Positions 39 to 111 (IRKYLNKVYK…EIVFNVVEVK (73 aa)) constitute a KH type-2 domain. The disordered stretch occupies residues 222-248 (KPFEASAPRPQRRNRKEANNYVNAKKN).

The protein belongs to the universal ribosomal protein uS3 family. In terms of assembly, part of the 30S ribosomal subunit. Forms a tight complex with proteins S10 and S14.

Functionally, binds the lower part of the 30S subunit head. Binds mRNA in the 70S ribosome, positioning it for translation. In Alteracholeplasma palmae (strain ATCC 49389 / J233) (Acholeplasma palmae), this protein is Small ribosomal subunit protein uS3.